The sequence spans 146 residues: Phospholipase A2 PS22 (146 aa).

The signal sequence occupies residues 1-19; the sequence is MYPAHLLVLLAVCVSLLGA. A propeptide spanning residues 20-27 is cleaved from the precursor; sequence ASVPPQPL. Cystine bridges form between C38–C98, C54–C145, C56–C72, C71–C126, C78–C119, C87–C112, and C105–C117. The Ca(2+) site is built by Y55, G57, and G59. The active site involves H75. D76 contributes to the Ca(2+) binding site. The active site involves D120.

This sequence belongs to the phospholipase A2 family. Group I subfamily. D49 sub-subfamily. Ca(2+) serves as cofactor. As to expression, expressed by the venom gland.

Its subcellular location is the secreted. The catalysed reaction is a 1,2-diacyl-sn-glycero-3-phosphocholine + H2O = a 1-acyl-sn-glycero-3-phosphocholine + a fatty acid + H(+). Snake venom phospholipase A2 (PLA2) that inhibits collagen-induced platelet aggregation. PLA2 catalyzes the calcium-dependent hydrolysis of the 2-acyl groups in 3-sn-phosphoglycerides. This chain is Phospholipase A2 PS22, found in Drysdalia coronoides (White-lipped snake).